The sequence spans 245 residues: 3-deoxy-manno-octulosonate cytidylyltransferase (245 aa).

Belongs to the KdsB family.

It localises to the cytoplasm. It catalyses the reaction 3-deoxy-alpha-D-manno-oct-2-ulosonate + CTP = CMP-3-deoxy-beta-D-manno-octulosonate + diphosphate. It functions in the pathway nucleotide-sugar biosynthesis; CMP-3-deoxy-D-manno-octulosonate biosynthesis; CMP-3-deoxy-D-manno-octulosonate from 3-deoxy-D-manno-octulosonate and CTP: step 1/1. It participates in bacterial outer membrane biogenesis; lipopolysaccharide biosynthesis. Its function is as follows. Activates KDO (a required 8-carbon sugar) for incorporation into bacterial lipopolysaccharide in Gram-negative bacteria. This is 3-deoxy-manno-octulosonate cytidylyltransferase from Rhodopseudomonas palustris (strain TIE-1).